Reading from the N-terminus, the 758-residue chain is Deoxynucleotidyltransferase terminal-interacting protein 2 (758 aa).

A compositionally biased stretch (polar residues) spans 1–21; that stretch reads MVVTRSGLSRTRLQESSQQKR. The tract at residues 1-176 is disordered; it reads MVVTRSGLSR…SQSGTVSDAE (176 aa). 4 positions are modified to phosphoserine: Ser17, Ser133, Ser137, and Ser140. Low complexity predominate over residues 128–143; that stretch reads DEVVVSEAESHVSGVS. Residues 155–172 are compositionally biased toward polar residues; the sequence is NKANSQRDSSQESQSGTV. Ser173 and Ser183 each carry phosphoserine. A Glycyl lysine isopeptide (Lys-Gly) (interchain with G-Cter in SUMO2) cross-link involves residue Lys210. Phosphoserine occurs at positions 229, 240, 248, and 255. Positions 231-255 are enriched in polar residues; the sequence is ATQLSARPLSQRNMPNVSDSETYNS. 4 disordered regions span residues 231-277, 312-353, 377-480, and 501-552; these read ATQL…HQNL, KVIN…QLSS, DKRG…AEDL, and DKNF…DLLS. Lys317 participates in a covalent cross-link: Glycyl lysine isopeptide (Lys-Gly) (interchain with G-Cter in SUMO2). A compositionally biased stretch (polar residues) spans 321-353; the sequence is RSLSEAQDTSLQQSVSQNHSSTPNKKPTFQLSS. Ser324 and Ser330 each carry phosphoserine. Glycyl lysine isopeptide (Lys-Gly) (interchain with G-Cter in SUMO2) cross-links involve residues Lys345 and Lys384. Positions 377-387 are enriched in basic and acidic residues; the sequence is DKRGGSGKKSD. The span at 431–440 shows a compositional bias: polar residues; that stretch reads LSMTQDTTDS. Low complexity predominate over residues 447–456; sequence SSDESQQSDS. A phosphoserine mark is found at Ser476 and Ser512. A coiled-coil region spans residues 512–541; that stretch reads SEVAIEEEKEEEEKEEENSEEDSSDSDENK. The span at 515–550 shows a compositional bias: acidic residues; sequence AIEEEKEEEEKEEENSEEDSSDSDENKDESSDEEDL. The tract at residues 550 to 607 is tdBR region; mediates interaction with DNTT; the sequence is LLSNTKSKLLKLTSSSIDPGLNIKQLGGLYINFNVDKLQPHKETLTQIKEKKKNELLQ. Residues Lys560, Lys586, and Lys608 each participate in a glycyl lysine isopeptide (Lys-Gly) (interchain with G-Cter in SUMO2) cross-link. Thr612 carries the post-translational modification Phosphothreonine. A disordered region spans residues 621-647; that stretch reads VPPYSESKHRLQKQRRKERQKTAGNGW. Residue Lys628 forms a Glycyl lysine isopeptide (Lys-Gly) (interchain with G-Cter in SUMO2) linkage. A compositionally biased stretch (basic residues) spans 630–639; that stretch reads RLQKQRRKER. Residues Lys651, Lys660, Lys688, and Lys733 each participate in a glycyl lysine isopeptide (Lys-Gly) (interchain with G-Cter in SUMO2) cross-link.

Forms a ternary complex with DNTT and core histone; interaction with PCNA releases DNTT and H2A/H2B histones from this ternary complex. Interacts with ESR1, ESR2, PPARG and RXRA. Part of the small subunit (SSU) processome, composed of more than 70 proteins and the RNA chaperone small nucleolar RNA (snoRNA) U3.

It localises to the nucleus. The protein localises to the nucleolus. Regulates the transcriptional activity of DNTT and ESR1. May function as a chromatin remodeling protein. Part of the small subunit (SSU) processome, first precursor of the small eukaryotic ribosomal subunit. During the assembly of the SSU processome in the nucleolus, many ribosome biogenesis factors, an RNA chaperone and ribosomal proteins associate with the nascent pre-rRNA and work in concert to generate RNA folding, modifications, rearrangements and cleavage as well as targeted degradation of pre-ribosomal RNA by the RNA exosome. The polypeptide is Deoxynucleotidyltransferase terminal-interacting protein 2 (Dnttip2) (Mus musculus (Mouse)).